The primary structure comprises 570 residues: Urease subunit alpha (570 aa).

Ni(2+) is bound by residues H137, H139, and K220. At K220 the chain carries N6-carboxylysine. H222 lines the substrate pocket. Residues H249 and H275 each coordinate Ni(2+). Catalysis depends on H323, which acts as the Proton donor. D363 lines the Ni(2+) pocket.

Belongs to the metallo-dependent hydrolases superfamily. Urease alpha subunit family. Heterotrimer of UreA (gamma), UreB (beta) and UreC (alpha) subunits. Three heterotrimers associate to form the active enzyme. Requires Ni cation as cofactor. In terms of processing, carboxylation allows a single lysine to coordinate two nickel ions.

It is found in the cytoplasm. It catalyses the reaction urea + 2 H2O + H(+) = hydrogencarbonate + 2 NH4(+). It participates in nitrogen metabolism; urea degradation; CO(2) and NH(3) from urea (urease route): step 1/1. In Lachnoclostridium phytofermentans (strain ATCC 700394 / DSM 18823 / ISDg) (Clostridium phytofermentans), this protein is Urease subunit alpha.